The following is a 310-amino-acid chain: Olfactory receptor 5P1 (310 aa).

The Extracellular portion of the chain corresponds to 1-25 (MEPGNHTAVTKFILLGLTDDPTLCV). N-linked (GlcNAc...) asparagine glycosylation occurs at Asn5. The helical transmembrane segment at 26–46 (IFFVFFLGIYIVTLVGNISII) threads the bilayer. Over 47-54 (NLVRSCPQ) the chain is Cytoplasmic. A helical membrane pass occupies residues 55–75 (LQTPMYMFLSHLAFVDIGYST). At 76 to 99 (SVTPIMLIGFIVHETGLPVHACEA) the chain is on the extracellular side. An intrachain disulfide couples Cys97 to Cys189. A helical membrane pass occupies residues 100–120 (QLCSVVTFGTAECFLLAAMAY). The Cytoplasmic segment spans residues 121–133 (DRYVAICSPLLYS). Residues 134–154 (THMSSQICLLLVGASYVGGCV) form a helical membrane-spanning segment. Over 155-196 (NAWTFTGCLLSLSFCGPNKIDHFFCDFSPLLKLSCSDVSIIG) the chain is Extracellular. Residues 197–217 (IIPSISAGSIIVVTVFVISVS) traverse the membrane as a helical segment. Residues 218–237 (YIYILITILKMRSTEGRHKA) are Cytoplasmic-facing. Residues 238 to 258 (FSTCTSHLTAVTLYYGTITFI) form a helical membrane-spanning segment. The Extracellular segment spans residues 259–271 (YVMPKSSYSTKQN). The chain crosses the membrane as a helical span at residues 272 to 292 (RVVSLFYTVVIPMLNPLIYSL). Residues 293–310 (RNRDVKEALRKATLRIYS) lie on the Cytoplasmic side of the membrane.

The protein belongs to the G-protein coupled receptor 1 family.

It is found in the cell membrane. In terms of biological role, potential odorant receptor. The sequence is that of Olfactory receptor 5P1 from Mus musculus (Mouse).